The chain runs to 100 residues: Large ribosomal subunit protein eL21 (100 aa).

This sequence belongs to the eukaryotic ribosomal protein eL21 family.

The protein is Large ribosomal subunit protein eL21 of Pyrobaculum aerophilum (strain ATCC 51768 / DSM 7523 / JCM 9630 / CIP 104966 / NBRC 100827 / IM2).